Here is a 314-residue protein sequence, read N- to C-terminus: Methionyl-tRNA formyltransferase (314 aa).

113–116 contributes to the (6S)-5,6,7,8-tetrahydrofolate binding site; it reads SLLP.

This sequence belongs to the Fmt family.

It catalyses the reaction L-methionyl-tRNA(fMet) + (6R)-10-formyltetrahydrofolate = N-formyl-L-methionyl-tRNA(fMet) + (6S)-5,6,7,8-tetrahydrofolate + H(+). Its function is as follows. Attaches a formyl group to the free amino group of methionyl-tRNA(fMet). The formyl group appears to play a dual role in the initiator identity of N-formylmethionyl-tRNA by promoting its recognition by IF2 and preventing the misappropriation of this tRNA by the elongation apparatus. In Pseudomonas aeruginosa (strain LESB58), this protein is Methionyl-tRNA formyltransferase.